The following is a 367-amino-acid chain: MKKQRIVVKIGSSSLADSHGGISTEQLSDHVAALARLKEEGHEVVLITSGAVAAGFSALGYPSRPVTIKGKQAAAAVGQSLLMQAYTEEFRKYGIVTAQLLLTRSDFSRKEQYSNAYATLGELLNRSALPIINENDSISLEELTFGDNDMLSALVSGLVSADMLMIFTDVNGLYDKNPQKNADAKKYYFLPEVTEEISSLAGDAGSKLGTGGMKSKIDAAKTALSLGVSVFIGTGRGQEKFVDVLKGKGDGTYVGNAPQKEMKMNKQWIALHSLVSGQIEVDAGAATAIIQHGKSLLPAGVTNVSGFFQVGEVVEVVTQQGRVIGKGQCTYSAEELRDVKGMQSQDIQVRGERHSYEVIHRDHWVSL.

Residue Lys9 participates in ATP binding. Positions 49, 136, and 148 each coordinate substrate. ATP contacts are provided by residues 168-169 (TD) and 210-216 (TGGMKSK). One can recognise a PUA domain in the interval 276-350 (SGQIEVDAGA…GMQSQDIQVR (75 aa)).

It belongs to the glutamate 5-kinase family.

Its subcellular location is the cytoplasm. The catalysed reaction is L-glutamate + ATP = L-glutamyl 5-phosphate + ADP. Its pathway is amino-acid biosynthesis; L-proline biosynthesis; L-glutamate 5-semialdehyde from L-glutamate: step 1/2. Its function is as follows. Catalyzes the transfer of a phosphate group to glutamate to form L-glutamate 5-phosphate. The sequence is that of Glutamate 5-kinase from Bacillus cereus (strain G9842).